The sequence spans 392 residues: Fasciculation and elongation protein zeta-1 (392 aa).

The segment at 1–36 (MEAPLVSLDEEFEDIRPSCTEEPEEKPQCLYGTSPH) is disordered. Ser-58 carries the post-translational modification Phosphoserine. The segment at 175–196 (MQNSPDPEEEEEVLEEEDGGEI) is disordered. Residues 180-194 (DPEEEEEVLEEEDGG) show a composition bias toward acidic residues. A coiled-coil region spans residues 230-298 (SELTELLDRV…KKRRKEKGLS (69 aa)). 2 positions are modified to phosphoserine: Ser-298 and Ser-316.

This sequence belongs to the zygin family. In terms of assembly, homodimer. Interacts with the NH2-terminal variable region (V1) of PKC zeta and weakly with that of PKC epsilon. Interacts with UBE4B and SAP30L. Interacts with SCOC and ULK1; SCOC interferes with ULK1-binding to FEZ1. Directly interacts with SCOC and UVRAG. Stabilizes the interaction between SCOC and UVRAG during amino acid starvation. In terms of processing, phosphorylated by protein kinase C zeta; which enhances interaction with UBE4B and polyubiquitination. Post-translationally, polyubiquitinated in a UBE4B-dependent manner; which does not lead to proteasomal degradation and may be important for neurogenic activity. Polyubiquitin linkage seems to be mainly through Lys-26.

The protein resides in the cytoplasm. It localises to the cytoskeleton. The protein localises to the microtubule organizing center. Its subcellular location is the centrosome. It is found in the cell membrane. In terms of biological role, may be involved in axonal outgrowth as component of the network of molecules that regulate cellular morphology and axon guidance machinery. May participate in the transport of mitochondria and other cargos along microtubules. The chain is Fasciculation and elongation protein zeta-1 (Fez1) from Mus musculus (Mouse).